The chain runs to 179 residues: Negative modulator of initiation of replication (179 aa).

It belongs to the SeqA family. In terms of assembly, homodimer. Polymerizes to form helical filaments.

Its subcellular location is the cytoplasm. Its function is as follows. Negative regulator of replication initiation, which contributes to regulation of DNA replication and ensures that replication initiation occurs exactly once per chromosome per cell cycle. Binds to pairs of hemimethylated GATC sequences in the oriC region, thus preventing assembly of replication proteins and re-initiation at newly replicated origins. Repression is relieved when the region becomes fully methylated. The sequence is that of Negative modulator of initiation of replication from Vibrio atlanticus (strain LGP32) (Vibrio splendidus (strain Mel32)).